Reading from the N-terminus, the 245-residue chain is 2,3-bisphosphoglycerate-dependent phosphoglycerate mutase (245 aa).

Residues 9–16 (RHGESEWN), 22–23 (TG), R61, 88–91 (ERHY), K99, 115–116 (RR), and 181–182 (GN) each bind substrate. Catalysis depends on H10, which acts as the Tele-phosphohistidine intermediate. E88 serves as the catalytic Proton donor/acceptor.

It belongs to the phosphoglycerate mutase family. BPG-dependent PGAM subfamily.

The catalysed reaction is (2R)-2-phosphoglycerate = (2R)-3-phosphoglycerate. It participates in carbohydrate degradation; glycolysis; pyruvate from D-glyceraldehyde 3-phosphate: step 3/5. Catalyzes the interconversion of 2-phosphoglycerate and 3-phosphoglycerate. In Nocardia farcinica (strain IFM 10152), this protein is 2,3-bisphosphoglycerate-dependent phosphoglycerate mutase.